We begin with the raw amino-acid sequence, 259 residues long: Phospholipase YtpA (259 aa).

Ser-88 functions as the Nucleophile in the catalytic mechanism. Active-site charge relay system residues include Asp-206 and His-236.

Belongs to the AB hydrolase superfamily.

Its pathway is antibiotic biosynthesis; bacilysocin biosynthesis. Its function is as follows. Phospholipase involved in the biosynthesis of the antibiotic bacilysocin. It probably catalyzes the hydrolysis of the 2-sn-acyl moiety of phosphatidylglycerol to produce bacilysocin (lysophosphatidylglycerol). Is also able to catalyze the hydrolysis reaction of one acyl bond in phosphatidylcholine in vitro (actual cleavage point is unknown), resulting in lysophosphatidylcholine. This Bacillus subtilis (strain 168) protein is Phospholipase YtpA (ytpA).